The primary structure comprises 44 residues: Thrombin-like enzyme F202 (44 aa).

Residues 1 to 44 (VVGGDECNINEHRFLVALYANSSLLCGGTLINQEWVLIAAHCDR) enclose the Peptidase S1 domain. The cysteines at positions 26 and 42 are disulfide-linked. The Charge relay system role is filled by His-41.

Belongs to the peptidase S1 family. Snake venom subfamily. In terms of assembly, monomer. Post-translationally, contains 6 disulfide bonds. Expressed by the venom gland.

It localises to the secreted. Enzyme activity is markedly inhibited by TLCK and PMSF, and moderately by SBTi. Platelet aggregating activity is strongly inhibited by TLCK. In terms of biological role, thrombin-like snake venom serine protease that coagulates fibrinogen by inducing a fast degradation of the alpha chain (FGA) from human citrated plasma, and a slow degradation of beta chain (FGB). Potently induces platelet aggregation in both platelet rich plasma and washed platelet preparations in a concentration-dependent fashion. Shows amidolytic activities. The chain is Thrombin-like enzyme F202 from Crotalus durissus cascavella (Northeastern Brazilian rattlesnake).